The sequence spans 323 residues: Cell division protein ZipA (323 aa).

Over 1-5 (MQELR) the chain is Periplasmic. A helical transmembrane segment spans residues 6-26 (FVLIVVGALAIAALLFHGLWT). The Cytoplasmic portion of the chain corresponds to 27 to 323 (SKKEGKAKFG…QIVEFNAANA (297 aa)). The tract at residues 35–92 (FGNKPLGKLDVDQEDKDTPGQERDFAPDPEDDFEIIRKDRKEPDFGMENSFDNKFSSD) is disordered. Composition is skewed to basic and acidic residues over residues 41 to 60 (GKLD…RDFA) and 68 to 78 (EIIRKDRKEPD).

This sequence belongs to the ZipA family. Interacts with FtsZ via their C-terminal domains.

The protein resides in the cell inner membrane. Functionally, essential cell division protein that stabilizes the FtsZ protofilaments by cross-linking them and that serves as a cytoplasmic membrane anchor for the Z ring. Also required for the recruitment to the septal ring of downstream cell division proteins. The chain is Cell division protein ZipA from Vibrio campbellii (strain ATCC BAA-1116).